Here is a 422-residue protein sequence, read N- to C-terminus: Glutamyl-tRNA reductase (422 aa).

Substrate contacts are provided by residues 49–52 (TCNR), Ser-110, 115–117 (EPQ), and Gln-121. Residue Cys-50 is the Nucleophile of the active site. 190–195 (GAGETI) serves as a coordination point for NADP(+).

This sequence belongs to the glutamyl-tRNA reductase family. In terms of assembly, homodimer.

The catalysed reaction is (S)-4-amino-5-oxopentanoate + tRNA(Glu) + NADP(+) = L-glutamyl-tRNA(Glu) + NADPH + H(+). It functions in the pathway porphyrin-containing compound metabolism; protoporphyrin-IX biosynthesis; 5-aminolevulinate from L-glutamyl-tRNA(Glu): step 1/2. Catalyzes the NADPH-dependent reduction of glutamyl-tRNA(Glu) to glutamate 1-semialdehyde (GSA). This is Glutamyl-tRNA reductase from Colwellia psychrerythraea (strain 34H / ATCC BAA-681) (Vibrio psychroerythus).